A 94-amino-acid chain; its full sequence is MLTVNEYFEGKVKSIGFSPAGLPATIGVMAIGEYTFGTDCREIMTVVSGELTVKLPEQADWHTYIAGQTFEVEANQSFDLKVAVETAYLCQYDR.

The protein belongs to the nucleoside phosphorylase PpnP family.

The enzyme catalyses a purine D-ribonucleoside + phosphate = a purine nucleobase + alpha-D-ribose 1-phosphate. It carries out the reaction adenosine + phosphate = alpha-D-ribose 1-phosphate + adenine. The catalysed reaction is cytidine + phosphate = cytosine + alpha-D-ribose 1-phosphate. It catalyses the reaction guanosine + phosphate = alpha-D-ribose 1-phosphate + guanine. The enzyme catalyses inosine + phosphate = alpha-D-ribose 1-phosphate + hypoxanthine. It carries out the reaction thymidine + phosphate = 2-deoxy-alpha-D-ribose 1-phosphate + thymine. The catalysed reaction is uridine + phosphate = alpha-D-ribose 1-phosphate + uracil. It catalyses the reaction xanthosine + phosphate = alpha-D-ribose 1-phosphate + xanthine. Its function is as follows. Catalyzes the phosphorolysis of diverse nucleosides, yielding D-ribose 1-phosphate and the respective free bases. Can use uridine, adenosine, guanosine, cytidine, thymidine, inosine and xanthosine as substrates. Also catalyzes the reverse reactions. This Teredinibacter turnerae (strain ATCC 39867 / T7901) protein is Pyrimidine/purine nucleoside phosphorylase.